Reading from the N-terminus, the 231-residue chain is Proteasome subunit alpha type-2 (231 aa).

It belongs to the peptidase T1A family. The 26S proteasome consists of a 20S proteasome core and two 19S regulatory subunits. The 20S proteasome core is composed of 28 subunits that are arranged in four stacked rings, resulting in a barrel-shaped structure. The two end rings are each formed by seven alpha subunits, and the two central rings are each formed by seven beta subunits. The catalytic chamber with the active sites is on the inside of the barrel.

The protein localises to the cytoplasm. It localises to the nucleus. Functionally, the proteasome is a multicatalytic proteinase complex which is characterized by its ability to cleave peptides with Arg, Phe, Tyr, Leu, and Glu adjacent to the leaving group at neutral or slightly basic pH. The proteasome has an ATP-dependent proteolytic activity. The protein is Proteasome subunit alpha type-2 of Trypanosoma brucei brucei.